The following is an 87-amino-acid chain: Phosphocarrier protein HPr (87 aa).

The HPr domain maps to 1-87 (MASKDFHIVA…AETMTKEGLA (87 aa)). His15 serves as the catalytic Pros-phosphohistidine intermediate. At Ser46 the chain carries Phosphoserine; by HPrK/P.

The protein belongs to the HPr family.

The protein localises to the cytoplasm. Phosphorylation on Ser-46 inhibits the phosphoryl transfer from enzyme I to HPr. In terms of biological role, general (non sugar-specific) component of the phosphoenolpyruvate-dependent sugar phosphotransferase system (sugar PTS). This major carbohydrate active-transport system catalyzes the phosphorylation of incoming sugar substrates concomitantly with their translocation across the cell membrane. The phosphoryl group from phosphoenolpyruvate (PEP) is transferred to the phosphoryl carrier protein HPr by enzyme I. Phospho-HPr then transfers it to the PTS EIIA domain. Functionally, P-Ser-HPr interacts with the catabolite control protein A (CcpA), forming a complex that binds to DNA at the catabolite response elements cre, operator sites preceding a large number of catabolite-regulated genes. Thus, P-Ser-HPr is a corepressor in carbon catabolite repression (CCR), a mechanism that allows bacteria to coordinate and optimize the utilization of available carbon sources. P-Ser-HPr also plays a role in inducer exclusion, in which it probably interacts with several non-PTS permeases and inhibits their transport activity. This Streptococcus salivarius protein is Phosphocarrier protein HPr (ptsH).